Reading from the N-terminus, the 78-residue chain is D-alanyl carrier protein (78 aa).

The 78-residue stretch at 1–78 (MDVENTVVEI…KIIAKAKELQ (78 aa)) folds into the Carrier domain. The residue at position 36 (Ser36) is an O-(pantetheine 4'-phosphoryl)serine.

This sequence belongs to the DltC family. In terms of processing, 4'-phosphopantetheine is transferred from CoA to a specific serine of apo-DCP.

The protein resides in the cytoplasm. It participates in cell wall biogenesis; lipoteichoic acid biosynthesis. Its function is as follows. Carrier protein involved in the D-alanylation of lipoteichoic acid (LTA). The loading of thioester-linked D-alanine onto DltC is catalyzed by D-alanine--D-alanyl carrier protein ligase DltA. The DltC-carried D-alanyl group is further transferred to cell membrane phosphatidylglycerol (PG) by forming an ester bond, probably catalyzed by DltD. D-alanylation of LTA plays an important role in modulating the properties of the cell wall in Gram-positive bacteria, influencing the net charge of the cell wall. In Latilactobacillus sakei subsp. sakei (strain 23K) (Lactobacillus sakei subsp. sakei), this protein is D-alanyl carrier protein.